The chain runs to 118 residues: Ribosomal silencing factor RsfS (118 aa).

The protein belongs to the Iojap/RsfS family. As to quaternary structure, interacts with ribosomal protein uL14 (rplN).

The protein localises to the cytoplasm. Functionally, functions as a ribosomal silencing factor. Interacts with ribosomal protein uL14 (rplN), blocking formation of intersubunit bridge B8. Prevents association of the 30S and 50S ribosomal subunits and the formation of functional ribosomes, thus repressing translation. In Bacillus subtilis (strain 168), this protein is Ribosomal silencing factor RsfS.